A 184-amino-acid polypeptide reads, in one-letter code: MSTFEDADTEETVTCLQMTIYHPGQQSGIFKSIRFCSKEKFPSIEVVKFGRNSNMCQYTFQDKQVSRIQFVLQPFKQFNSSVLSFEIKNMSKKTSLMVDNQELGYLNKMDLPYKCMLRFGEYQFLLQKEDGESVESFETQFIMSSRPLLQENNWPTQNPIPEDGMYSSYFTHRSSPSEMDENEL.

Thr-9 bears the Phosphothreonine mark. In terms of domain architecture, FHA spans 47–103 (VKFGRNSNMCQYTFQDKQVSRIQFVLQPFKQFNSSVLSFEIKNMSKKTSLMVDNQEL). The segment at 152-184 (NNWPTQNPIPEDGMYSSYFTHRSSPSEMDENEL) is disordered. Polar residues predominate over residues 168–177 (SYFTHRSSPS).

This sequence belongs to the TIFA family. Homooligomer; homooligomerizes following phosphorylation at Thr-9. Interacts with IRAK1, TRAF2 and TRAF6. Interacts with TIFAB; binding to TIFAB inhibits TRAF6 activation, possibly by inducing a conformational change in TIFA. Interacts with ZCCHC11; binding to ZCCHC11 suppresses the TRAF6-dependent activation of NF-kappa-B. Post-translationally, phosphorylated at Thr-9 following detection of ADP-D-glycero-beta-D-manno-heptose (ADP-Heptose) by ALPK1. Phosphorylation at Thr-9 by ALPK1 leads to the formation of an intermolecular binding between the FHA domain and phosphorylated Thr-9, promoting TIFA oligomerization and TIFA-mediated NF-kappa-B activation. As to expression, highly expressed in the spleen and at lower levels in heart, brain, lung, liver, kidney and testes.

It localises to the cytoplasm. Adapter molecule that plays a key role in the activation of pro-inflammatory NF-kappa-B signaling following detection of bacterial pathogen-associated molecular pattern metabolites (PAMPs). Promotes activation of an innate immune response by inducing the oligomerization and polyubiquitination of TRAF6, which leads to the activation of TAK1 and IKK through a proteasome-independent mechanism. TIFA-dependent innate immune response is triggered by ADP-D-glycero-beta-D-manno-heptose (ADP-Heptose), a potent PAMP present in all Gram-negative and some Gram-positive bacteria: ADP-Heptose is recognized by ALPK1, which phosphorylates TIFA at Thr-9, leading to TIFA homooligomerization and subsequent activation of pro-inflammatory NF-kappa-B signaling. This is TRAF-interacting protein with FHA domain-containing protein A from Mus musculus (Mouse).